The primary structure comprises 315 residues: Large ribosomal subunit protein uL29m (315 aa).

This sequence belongs to the universal ribosomal protein uL29 family. As to quaternary structure, component of the mitochondrial large ribosomal subunit. Mature mitochondrial ribosomes consist of a small (37S) and a large (54S) subunit. The 37S subunit contains at least 33 different proteins and 1 molecule of RNA (15S). The 54S subunit contains at least 45 different proteins and 1 molecule of RNA (21S).

The protein resides in the mitochondrion. In Candida glabrata (strain ATCC 2001 / BCRC 20586 / JCM 3761 / NBRC 0622 / NRRL Y-65 / CBS 138) (Yeast), this protein is Large ribosomal subunit protein uL29m (MRPL4).